The following is a 120-amino-acid chain: Large ribosomal subunit protein bL19 (120 aa).

The protein belongs to the bacterial ribosomal protein bL19 family.

This protein is located at the 30S-50S ribosomal subunit interface and may play a role in the structure and function of the aminoacyl-tRNA binding site. In Microcystis aeruginosa (strain NIES-843 / IAM M-2473), this protein is Large ribosomal subunit protein bL19.